A 173-amino-acid chain; its full sequence is Large ribosomal subunit protein uL16 (173 aa).

It belongs to the universal ribosomal protein uL16 family.

This is Large ribosomal subunit protein uL16 from Methanococcus maripaludis (strain DSM 14266 / JCM 13030 / NBRC 101832 / S2 / LL).